We begin with the raw amino-acid sequence, 499 residues long: Glycerol kinase (499 aa).

Threonine 13 is an ADP binding site. ATP-binding residues include threonine 13, threonine 14, and serine 15. Residue threonine 13 participates in sn-glycerol 3-phosphate binding. Residue arginine 17 coordinates ADP. Sn-glycerol 3-phosphate-binding residues include arginine 83, glutamate 84, tyrosine 135, and aspartate 244. Positions 83, 84, 135, 244, and 245 each coordinate glycerol. Positions 266 and 309 each coordinate ADP. Residues threonine 266, glycine 309, glutamine 313, and glycine 410 each contribute to the ATP site. ADP-binding residues include glycine 410 and asparagine 414.

This sequence belongs to the FGGY kinase family.

The enzyme catalyses glycerol + ATP = sn-glycerol 3-phosphate + ADP + H(+). Its pathway is polyol metabolism; glycerol degradation via glycerol kinase pathway; sn-glycerol 3-phosphate from glycerol: step 1/1. With respect to regulation, inhibited by fructose 1,6-bisphosphate (FBP). In terms of biological role, key enzyme in the regulation of glycerol uptake and metabolism. Catalyzes the phosphorylation of glycerol to yield sn-glycerol 3-phosphate. The chain is Glycerol kinase from Paraburkholderia phytofirmans (strain DSM 17436 / LMG 22146 / PsJN) (Burkholderia phytofirmans).